A 315-amino-acid chain; its full sequence is Hydroxysteroid 11-beta-dehydrogenase 1-like protein (315 aa).

The first 15 residues, 1–15 (MKVLLLTGLGALFFA), serve as a signal peptide directing secretion. Residues 36–62 (GANA…TAHT), 87–88 (DM), and 114–116 (NHI) contribute to the NADP(+) site. S165 is a binding site for substrate. Y178 functions as the Proton acceptor in the catalytic mechanism. NADP(+) contacts are provided by residues 178-182 (YSAAK) and 211-217 (GLRDRAS). The tract at residues 221 to 286 (AVRSSTSRPR…SKTEKNDGHL (66 aa)) is disordered. Positions 277 to 286 (SKTEKNDGHL) are enriched in basic and acidic residues.

The protein belongs to the short-chain dehydrogenases/reductases (SDR) family. As to expression, highly expressed in the brain.

It is found in the secreted. The enzyme catalyses cortisone + NADPH + H(+) = cortisol + NADP(+). Its function is as follows. Unidirectional NADP(+)-dependent cortisol dehydrogenase (in vitro). The chain is Hydroxysteroid 11-beta-dehydrogenase 1-like protein (HSD11B1L) from Homo sapiens (Human).